The sequence spans 340 residues: Fructose-1,6-bisphosphatase class 1 (340 aa).

Mg(2+) is bound by residues Glu107, Asp126, Leu128, and Asp129. Asn215 is a substrate binding site. Glu287 serves as a coordination point for Mg(2+).

It belongs to the FBPase class 1 family. As to quaternary structure, homotetramer. Mg(2+) is required as a cofactor.

Its subcellular location is the cytoplasm. It carries out the reaction beta-D-fructose 1,6-bisphosphate + H2O = beta-D-fructose 6-phosphate + phosphate. It functions in the pathway carbohydrate biosynthesis; gluconeogenesis. The polypeptide is Fructose-1,6-bisphosphatase class 1 (Brucella ovis (strain ATCC 25840 / 63/290 / NCTC 10512)).